Consider the following 272-residue polypeptide: Phosphatidylglycerol--prolipoprotein diacylglyceryl transferase (272 aa).

4 consecutive transmembrane segments (helical) span residues 24 to 44 (WYGI…KWIA), 59 to 79 (YFIW…ILFY), 102 to 122 (FIGI…IASF), and 129 to 149 (GVKF…GYVF). R151 is a binding site for a 1,2-diacyl-sn-glycero-3-phospho-(1'-sn-glycerol). 3 helical membrane-spanning segments follow: residues 180–200 (PSQL…LYAW), 208–228 (GQLG…AEFW), and 244–264 (MGQL…GYLA).

It belongs to the Lgt family.

Its subcellular location is the cell inner membrane. The catalysed reaction is L-cysteinyl-[prolipoprotein] + a 1,2-diacyl-sn-glycero-3-phospho-(1'-sn-glycerol) = an S-1,2-diacyl-sn-glyceryl-L-cysteinyl-[prolipoprotein] + sn-glycerol 1-phosphate + H(+). Its pathway is protein modification; lipoprotein biosynthesis (diacylglyceryl transfer). In terms of biological role, catalyzes the transfer of the diacylglyceryl group from phosphatidylglycerol to the sulfhydryl group of the N-terminal cysteine of a prolipoprotein, the first step in the formation of mature lipoproteins. The protein is Phosphatidylglycerol--prolipoprotein diacylglyceryl transferase of Wolinella succinogenes (strain ATCC 29543 / DSM 1740 / CCUG 13145 / JCM 31913 / LMG 7466 / NCTC 11488 / FDC 602W) (Vibrio succinogenes).